The following is a 66-amino-acid chain: U-scoloptoxin(04)-Ssd2a (66 aa).

A signal peptide spans M1 to S19.

This sequence belongs to the scoloptoxin-04 family. In terms of processing, contains 2 disulfide bonds. In terms of tissue distribution, expressed by the venom gland.

The protein localises to the secreted. The protein is U-scoloptoxin(04)-Ssd2a of Scolopendra dehaani (Thai centipede).